The following is a 73-amino-acid chain: Large ribosomal subunit protein bL31 (73 aa).

Residues Cys-16, Cys-18, Cys-36, and Cys-39 each contribute to the Zn(2+) site.

Belongs to the bacterial ribosomal protein bL31 family. Type A subfamily. In terms of assembly, part of the 50S ribosomal subunit. It depends on Zn(2+) as a cofactor.

Binds the 23S rRNA. In Desulfosudis oleivorans (strain DSM 6200 / JCM 39069 / Hxd3) (Desulfococcus oleovorans), this protein is Large ribosomal subunit protein bL31.